We begin with the raw amino-acid sequence, 552 residues long: Glutamate--tRNA ligase (552 aa).

The 'HIGH' region motif lies at 102–112; the sequence is PNPSGPLHIGH.

The protein belongs to the class-I aminoacyl-tRNA synthetase family. Glutamate--tRNA ligase type 2 subfamily.

It is found in the cytoplasm. It carries out the reaction tRNA(Glu) + L-glutamate + ATP = L-glutamyl-tRNA(Glu) + AMP + diphosphate. Catalyzes the attachment of glutamate to tRNA(Glu) in a two-step reaction: glutamate is first activated by ATP to form Glu-AMP and then transferred to the acceptor end of tRNA(Glu). The chain is Glutamate--tRNA ligase from Methanothermobacter marburgensis (strain ATCC BAA-927 / DSM 2133 / JCM 14651 / NBRC 100331 / OCM 82 / Marburg) (Methanobacterium thermoautotrophicum).